The primary structure comprises 171 residues: Transcription antitermination protein NusB (171 aa).

It belongs to the NusB family.

In terms of biological role, involved in transcription antitermination. Required for transcription of ribosomal RNA (rRNA) genes. Binds specifically to the boxA antiterminator sequence of the ribosomal RNA (rrn) operons. This Brucella suis (strain ATCC 23445 / NCTC 10510) protein is Transcription antitermination protein NusB.